The sequence spans 269 residues: UPF0494 membrane protein C1348.01 (269 aa).

Transmembrane regions (helical) follow at residues 107–127 (WPLLIIWSIIIVFAVDKKFEV), 144–164 (IWVPIAIYVCLLVLMLLSLIF), 177–197 (GVIIAVLGMIIAVLGMIIAAL), and 201–221 (ITGLLYFGHWALYKLVILSLG).

This sequence belongs to the UPF0494 family.

The protein resides in the vacuole membrane. This is UPF0494 membrane protein C1348.01 from Schizosaccharomyces pombe (strain 972 / ATCC 24843) (Fission yeast).